A 238-amino-acid polypeptide reads, in one-letter code: 7-cyano-7-deazaguanine synthase (238 aa).

14 to 24 (FSGGQDSATCL) is a binding site for ATP. Residues Cys-202, Cys-217, Cys-220, and Cys-223 each coordinate Zn(2+).

This sequence belongs to the QueC family. The cofactor is Zn(2+).

It carries out the reaction 7-carboxy-7-deazaguanine + NH4(+) + ATP = 7-cyano-7-deazaguanine + ADP + phosphate + H2O + H(+). It functions in the pathway purine metabolism; 7-cyano-7-deazaguanine biosynthesis. Catalyzes the ATP-dependent conversion of 7-carboxy-7-deazaguanine (CDG) to 7-cyano-7-deazaguanine (preQ(0)). The sequence is that of 7-cyano-7-deazaguanine synthase from Nitrobacter winogradskyi (strain ATCC 25391 / DSM 10237 / CIP 104748 / NCIMB 11846 / Nb-255).